The primary structure comprises 404 residues: Ribosomal RNA large subunit methyltransferase F (404 aa).

Composition is skewed to basic residues over residues 1 to 10 and 18 to 29; these read MTKHSQKQNR and QTRRKKPAGKLK. 3 disordered regions span residues 1–54, 156–177, and 289–308; these read MTKH…HERN, GTRQNVPYASKPESSAPKQRYK, and RAAKGHKPEPAASKAKPDAN. The span at 30-54 shows a compositional bias: basic and acidic residues; the sequence is AKSEAKLDTRGKPETTEKKGLHERN. A compositionally biased stretch (polar residues) spans 157 to 172; the sequence is TRQNVPYASKPESSAP.

Belongs to the methyltransferase superfamily. METTL16/RlmF family.

It localises to the cytoplasm. The catalysed reaction is adenosine(1618) in 23S rRNA + S-adenosyl-L-methionine = N(6)-methyladenosine(1618) in 23S rRNA + S-adenosyl-L-homocysteine + H(+). Its function is as follows. Specifically methylates the adenine in position 1618 of 23S rRNA. The protein is Ribosomal RNA large subunit methyltransferase F of Shewanella sediminis (strain HAW-EB3).